The primary structure comprises 707 residues: Ornithine decarboxylase (707 aa).

The segment at 83–102 is disordered; that stretch reads NRNPLSRADSAAGREETAQT. At lysine 288 the chain carries N6-(pyridoxal phosphate)lysine. Pyridoxal 5'-phosphate is bound by residues serine 421, glycine 458, and 498-501; that span reads EPGR. Residue 561–562 participates in substrate binding; the sequence is FD. Cysteine 634 functions as the Proton donor; shared with dimeric partner in the catalytic mechanism. Residue aspartate 635 participates in substrate binding. Tyrosine 663 lines the pyridoxal 5'-phosphate pocket.

Belongs to the Orn/Lys/Arg decarboxylase class-II family. As to quaternary structure, homodimer. Only the dimer is catalytically active, as the active sites are constructed of residues from both monomers. Pyridoxal 5'-phosphate serves as cofactor.

It catalyses the reaction L-ornithine + H(+) = putrescine + CO2. It participates in amine and polyamine biosynthesis; putrescine biosynthesis via L-ornithine pathway; putrescine from L-ornithine: step 1/1. Inhibited by antizyme (AZ) in response to polyamine levels. AZ inhibits the assembly of the functional homodimer by binding to ODC monomers and targeting them for ubiquitin-independent proteolytic destruction by the 26S proteasome. Inhibited by 1-amino-oxy-3-aminopropane (APA, an isosteric analog of putrescine). Irreversibly inhibited by alpha-difluoromethylornithine (DFMO, a curative agent of West African sleeping sickness). Its function is as follows. Catalyzes the first and rate-limiting step of polyamine biosynthesis that converts ornithine into putrescine, which is the precursor for the polyamines, spermidine and spermine. Polyamines are essential for cell proliferation and are implicated in cellular processes, ranging from DNA replication to apoptosis. In Leishmania donovani, this protein is Ornithine decarboxylase.